Here is a 123-residue protein sequence, read N- to C-terminus: uncharacterized protein (123 aa).

This is an uncharacterized protein from Acanthamoeba polyphaga mimivirus (APMV).